The following is a 245-amino-acid chain: AP-1-like transcription factor YAP7 (245 aa).

The interval 1–144 (MRQRRSVVAV…NRDAQRAYRE (144 aa)) is disordered. The span at 74–94 (SANNDGSSKIKKVQTSNQKDQ) shows a compositional bias: polar residues. Basic and acidic residues-rich tracts occupy residues 95–114 (MTTK…KSDD) and 135–144 (NRDAQRAYRE). Positions 125-188 (VDSVEKRRRQ…SDTKENLQKS (64 aa)) constitute a bZIP domain. The basic motif stretch occupies residues 130-149 (KRRRQNRDAQRAYRERRTTR). Residues 153–181 (LEEKVEMLHNLVDDWQRKYKLLESEFSDT) form a leucine-zipper region.

The protein belongs to the bZIP family. YAP subfamily. In terms of assembly, homodimer.

It localises to the nucleus. In terms of biological role, probable transcription activator linked to cell cycle that induces transcription activation of genes in the environmental stress response and metabolism control pathways, like the closely related YAP5. This Saccharomyces cerevisiae (strain ATCC 204508 / S288c) (Baker's yeast) protein is AP-1-like transcription factor YAP7 (YAP7).